The primary structure comprises 334 residues: Phospholipase A1 1 (334 aa).

The N-terminal stretch at 1-23 is a signal peptide; sequence MMNLKYLLFFCLVQALHYCYAYG. Positions 24 to 33 are excised as a propeptide; the sequence is DPSLSNELDR. Cys-37 and Cys-120 are disulfide-bonded. The Nucleophile role is filled by Ser-170. Asp-198 functions as the Charge relay system in the catalytic mechanism. Cystine bridges form between Cys-209–Cys-214 and Cys-252–Cys-261. Residue His-263 is the Charge relay system of the active site. 3 cysteine pairs are disulfide-bonded: Cys-278/Cys-302, Cys-279/Cys-327, and Cys-295/Cys-300.

The protein belongs to the AB hydrolase superfamily. Lipase family. Not glycosylated. As to expression, expressed by the venom gland.

The protein resides in the secreted. It carries out the reaction a 1,2-diacyl-sn-glycero-3-phosphocholine + H2O = a 2-acyl-sn-glycero-3-phosphocholine + a fatty acid + H(+). Its function is as follows. Catalyzes the hydrolysis of phosphatidylcholine with phospholipase A1 activity (3.6 U/ml). May act as an allergen and induce hemolytic activity. In vivo, a mixture of this protein and Ves a 1.02 is able to paralyze crickets. The chain is Phospholipase A1 1 from Vespa affinis (Lesser banded hornet).